The chain runs to 189 residues: Chitin synthase 2 (189 aa).

Belongs to the chitin synthase family. Class II subfamily.

It is found in the cell membrane. The enzyme catalyses [(1-&gt;4)-N-acetyl-beta-D-glucosaminyl](n) + UDP-N-acetyl-alpha-D-glucosamine = [(1-&gt;4)-N-acetyl-beta-D-glucosaminyl](n+1) + UDP + H(+). Functionally, polymerizes chitin, a structural polymer of the cell wall and septum, by transferring the sugar moiety of UDP-GlcNAc to the non-reducing end of the growing chitin polymer. This chain is Chitin synthase 2 (CHS2), found in Xylohypha bantiana.